The chain runs to 314 residues: Short-chain dehydrogenase/reductase sthC (314 aa).

The segment covering 1–10 has biased composition (polar residues); sequence MAPAETTGNV. The segment at 1-27 is disordered; sequence MAPAETTGNVQRPEAGKQSMGSFWTQM. NADP(+) contacts are provided by Val56, Lys80, Asp105, Asn132, and Arg167. Ser191 acts as the Proton donor in catalysis. NADP(+) is bound by residues Tyr222 and Lys226. Residue Tyr222 is the Proton acceptor of the active site. The active-site Lowers pKa of active site Tyr is the Lys226.

The protein belongs to the short-chain dehydrogenases/reductases (SDR) family.

The catalysed reaction is dehydroprobetaenone I + AH2 = probetaenone I + A. It carries out the reaction betaenone C + AH2 = betaenone B + A. It functions in the pathway mycotoxin biosynthesis. Functionally, short-chain dehydrogenase/reductase; part of the gene cluster that mediates the biosynthesis of the phytotoxin stemphyloxin II. The first step of the pathway is the synthesis of dehydroprobetaenone I by the polyketide synthase sthA and the enoyl reductase sthE via condensation of one acetyl-CoA starter unit with 7 malonyl-CoA units and 5 methylations. The C-terminal reductase (R) domain of sthA catalyzes the reductive release of the polyketide chain. Because sthA lacks a designated enoylreductase (ER) domain, the required activity is provided the enoyl reductase sthE. The short-chain dehydrogenase/reductase sthC then catalyzes reduction of dehydroprobetaenone I to probetaenone I. The cytochrome P450 monooxygenase sthF catalyzes successive epoxidation, oxidation (resulting from epoxide opening) and hydroxylation to install a tertiary alcohol in the decaline ring to yield betaenone C from dehydroprobetaenone I and betaenone B from probetaenone I. The FAD-linked oxidoreductase sthB is responsible for the conversion of betaenone C to betaenone A via an intramolecular aldol reaction between C-1 and C-17 to form the bridged tricyclic system in betaenone A. Finally, the cytochrome P450 monooxygenase sthD catalyzes the hydroxylation of C-15 to afford the final metabolite stemphyloxin II. This is Short-chain dehydrogenase/reductase sthC from Phaeosphaeria nodorum (strain SN15 / ATCC MYA-4574 / FGSC 10173) (Glume blotch fungus).